Here is a 327-residue protein sequence, read N- to C-terminus: DNA-directed RNA polymerase subunit alpha (327 aa).

Positions 1–227 (MLIAHRPTLI…ELFGLARELN (227 aa)) are alpha N-terminal domain (alpha-NTD). The tract at residues 244–327 (SDEDLRIPIE…GSYFDPNYGS (84 aa)) is alpha C-terminal domain (alpha-CTD).

The protein belongs to the RNA polymerase alpha chain family. In terms of assembly, homodimer. The RNAP catalytic core consists of 2 alpha, 1 beta, 1 beta' and 1 omega subunit. When a sigma factor is associated with the core the holoenzyme is formed, which can initiate transcription.

The enzyme catalyses RNA(n) + a ribonucleoside 5'-triphosphate = RNA(n+1) + diphosphate. Its function is as follows. DNA-dependent RNA polymerase catalyzes the transcription of DNA into RNA using the four ribonucleoside triphosphates as substrates. The protein is DNA-directed RNA polymerase subunit alpha of Tropheryma whipplei (strain TW08/27) (Whipple's bacillus).